The sequence spans 356 residues: CMP-sialic acid transporter 2 (356 aa).

The span at 1 to 24 (MEYRRVKDQESYDVVSQKDIESPG) shows a compositional bias: basic and acidic residues. A disordered region spans residues 1–43 (MEYRRVKDQESYDVVSQKDIESPGERSLSSTSATSSLSTAGAS). Residues 1–52 (MEYRRVKDQESYDVVSQKDIESPGERSLSSTSATSSLSTAGASKGNNSWKLK) are Cytoplasmic-facing. Residues 27 to 43 (SLSSTSATSSLSTAGAS) are compositionally biased toward low complexity. A helical membrane pass occupies residues 53–73 (SIVTLALTLLTSSQAILIVWS). Over 74–82 (KRAGKYEYS) the chain is Lumenal. A helical transmembrane segment spans residues 83–103 (VTTANFSVEALKCLLSLIALY). The Cytoplasmic segment spans residues 104-125 (RTWNSQGVTEDNRLSTSFDEVS). The helical transmembrane segment at 126–146 (VYPIPAILYMVKNLLQYYIFA) threads the bilayer. Over 147 to 149 (YVD) the chain is Lumenal. A helical transmembrane segment spans residues 150 to 172 (APAYQILKNLNIISTGVLYRIIL). The Cytoplasmic segment spans residues 173 to 175 (KKK). A helical transmembrane segment spans residues 176–196 (LSEIQWAAFILLCAGCTTAQL). Over 197 to 211 (NPSSDHVLQTPIQGW) the chain is Lumenal. A helical membrane pass occupies residues 212–232 (VMAIVMALLSGFAGVYTEAII). Topologically, residues 233 to 239 (KKRPSRN) are cytoplasmic. Residues 240–260 (INVQNFWLYIFGMLFNLVAIC) form a helical membrane-spanning segment. The Lumenal portion of the chain corresponds to 261–277 (VQDFDAVMNKGFFHGYS). The chain crosses the membrane as a helical span at residues 278–298 (FITVLMILNHALSGIAVSMVM). Over 299–314 (KYADNIVKVYSTSVAM) the chain is Cytoplasmic. Residues 315 to 335 (LLTAVVSVFLFGFHLSLAFFL) traverse the membrane as a helical segment. Residues 336–356 (GSTVVSVSVYLHSVGKPQPQK) lie on the Lumenal side of the membrane.

Belongs to the nucleotide-sugar transporter family. CMP-Sialate:CMP antiporter (TC 2.A.7.12) subfamily.

It localises to the golgi apparatus membrane. Its function is as follows. Sugar transporter involved in the transport of CMP-sialic acid from the cytoplasm into the Golgi. May transport important nucleotide sugars such as CMP-Kdo (2-keto-3-deoxy-D-manno-octulosonic acid) in physiological conditions. The protein is CMP-sialic acid transporter 2 of Oryza sativa subsp. indica (Rice).